The chain runs to 154 residues: Snaclec agglucetin subunit alpha-1 (154 aa).

The first 23 residues, 1 to 23 (MGRFIFVSFGLLVVFLSLSGTGA), serve as a signal peptide directing secretion. Intrachain disulfides connect cysteine 27–cysteine 38, cysteine 55–cysteine 150, and cysteine 125–cysteine 142. A C-type lectin domain is found at 34-151 (YDQSCYRVFK…CGSEYAFVCK (118 aa)). An N-linked (GlcNAc...) asparagine glycan is attached at asparagine 116.

It belongs to the snaclec family. Heterotetramer of the subunits alpha-1, alpha-2, beta-1 and beta-2; disulfide-linked. Expressed by the venom gland.

It localises to the secreted. In terms of biological role, agglucetin specifically causes platelet aggregation and surface exposure of integrin alpha-IIb/beta-3 with a GPIb-(GP1BA-) dependent manner in washed platelets. It binds to human platelets in a saturable manner, and its binding is specifically blocked by anti-GP Ib mAb. It regulates endothelial cell survival and promotes angiogenesis by activating integrin alpha-v/beta-3 signaling through FAK/phosphatidylinositol 3-kinase (PI3K)/Akt pathway. The protein is Snaclec agglucetin subunit alpha-1 of Deinagkistrodon acutus (Hundred-pace snake).